A 499-amino-acid polypeptide reads, in one-letter code: T-cell activation inhibitor, mitochondrial (499 aa).

The stretch at 206 to 233 (LRNSLPLRKELDRLKNELSELLQLSDIR) forms a coiled coil.

In terms of tissue distribution, expressed in peripheral blood leukocytes, mainly in T-lymphocytes.

It localises to the mitochondrion. Functionally, may regulate T-cell apoptosis. The chain is T-cell activation inhibitor, mitochondrial (TCAIM) from Mus musculus (Mouse).